The primary structure comprises 554 residues: CTP synthase (554 aa).

The amidoligase domain stretch occupies residues 1 to 270 (MTKFVFVTGG…DRIICEELRI (270 aa)). Ser13 provides a ligand contact to CTP. Ser13 provides a ligand contact to UTP. Residues 14 to 19 (SLGKGI) and Asp71 each bind ATP. Mg(2+) contacts are provided by Asp71 and Glu144. CTP is bound by residues 151-153 (DIE), 191-196 (KTKPTQ), and Lys227. Residues 191 to 196 (KTKPTQ) and Lys227 contribute to the UTP site. The Glutamine amidotransferase type-1 domain maps to 295 to 547 (TIGMVGKYVD…VEAALAHRQR (253 aa)). Gly356 contacts L-glutamine. The Nucleophile; for glutamine hydrolysis role is filled by Cys383. L-glutamine-binding positions include 384–387 (LGMQ), Glu407, and Arg473. Active-site residues include His520 and Glu522.

It belongs to the CTP synthase family. Homotetramer.

The catalysed reaction is UTP + L-glutamine + ATP + H2O = CTP + L-glutamate + ADP + phosphate + 2 H(+). It carries out the reaction L-glutamine + H2O = L-glutamate + NH4(+). The enzyme catalyses UTP + NH4(+) + ATP = CTP + ADP + phosphate + 2 H(+). It participates in pyrimidine metabolism; CTP biosynthesis via de novo pathway; CTP from UDP: step 2/2. Allosterically activated by GTP, when glutamine is the substrate; GTP has no effect on the reaction when ammonia is the substrate. The allosteric effector GTP functions by stabilizing the protein conformation that binds the tetrahedral intermediate(s) formed during glutamine hydrolysis. Inhibited by the product CTP, via allosteric rather than competitive inhibition. Catalyzes the ATP-dependent amination of UTP to CTP with either L-glutamine or ammonia as the source of nitrogen. Regulates intracellular CTP levels through interactions with the four ribonucleotide triphosphates. This Ralstonia nicotianae (strain ATCC BAA-1114 / GMI1000) (Ralstonia solanacearum) protein is CTP synthase.